A 730-amino-acid chain; its full sequence is Elongation factor 2 (730 aa).

The tr-type G domain maps to 19 to 260 (EKIRNIGIVA…MVIRFLPNPL (242 aa)). Residues 28–35 (AHIDHGKT), 94–98 (DTPGH), and 148–151 (NKVD) each bind GTP. A Diphthamide modification is found at H596.

It belongs to the TRAFAC class translation factor GTPase superfamily. Classic translation factor GTPase family. EF-G/EF-2 subfamily.

It localises to the cytoplasm. Functionally, catalyzes the GTP-dependent ribosomal translocation step during translation elongation. During this step, the ribosome changes from the pre-translocational (PRE) to the post-translocational (POST) state as the newly formed A-site-bound peptidyl-tRNA and P-site-bound deacylated tRNA move to the P and E sites, respectively. Catalyzes the coordinated movement of the two tRNA molecules, the mRNA and conformational changes in the ribosome. In Methanosarcina thermophila, this protein is Elongation factor 2 (fusA).